The sequence spans 165 residues: Thiol peroxidase (165 aa).

A Thioredoxin domain is found at 18–164 (RKVGDKAPNF…YEAAIEAAKK (147 aa)). Cys60 serves as the catalytic Cysteine sulfenic acid (-SOH) intermediate. The cysteines at positions 60 and 94 are disulfide-linked.

It belongs to the peroxiredoxin family. Tpx subfamily. Homodimer.

The catalysed reaction is a hydroperoxide + [thioredoxin]-dithiol = an alcohol + [thioredoxin]-disulfide + H2O. Thiol-specific peroxidase that catalyzes the reduction of hydrogen peroxide and organic hydroperoxides to water and alcohols, respectively. Plays a role in cell protection against oxidative stress by detoxifying peroxides. The chain is Thiol peroxidase from Listeria monocytogenes serotype 4b (strain F2365).